The chain runs to 310 residues: MARTEGDTWDIVTSVGATALVVSAMRAIEARKPEPLARDDYAQHFVAATKAEAPLFSELLEDPEAAQAPDIQLFSSYLGARTKYFDEFFLTAGNAGVRQAVILAAGLDVRGYRLPWAAGTTVYELDLPKVLEFKKQVLDEHNARATATVLDLHVDLRDDWPTVLKAAGFDPAQPTAWLAEGLLPFLPGAAQDLLFERIADLSAPGSRVAVEDFGAPGNQADRMSNAMQNEEGALQRIFKSIVEEDAPPSSLWFGDEREDPARWLTGHGWTVEATTAGELLKRYNRVPLAGEHELTDAMGQSRYFTAVLGA.

S-adenosyl-L-methionine is bound by residues D126 and 155–156 (DL).

Belongs to the UPF0677 family.

Exhibits S-adenosyl-L-methionine-dependent methyltransferase activity. This is Putative S-adenosyl-L-methionine-dependent methyltransferase MAB_4587c from Mycobacteroides abscessus (strain ATCC 19977 / DSM 44196 / CCUG 20993 / CIP 104536 / JCM 13569 / NCTC 13031 / TMC 1543 / L948) (Mycobacterium abscessus).